The sequence spans 76 residues: UPF0291 protein BT9727_1737 (76 aa).

Belongs to the UPF0291 family.

It localises to the cytoplasm. The protein is UPF0291 protein BT9727_1737 of Bacillus thuringiensis subsp. konkukian (strain 97-27).